The sequence spans 141 residues: 16 kDa protein (141 aa).

The segment at E95–E116 is disordered. The segment covering T100 to K113 has biased composition (basic residues).

The chain is 16 kDa protein from Tobacco rattle virus (strain PSG).